Reading from the N-terminus, the 522-residue chain is MPRKKAAAAAWEEPSSGNGTARAGPRKRGGPAGRKRERPERCSSSSGGGSSGDEDGLELDGAPGGGKRAARPATAGKAGGAAVVITEPEHTKERVKLEGSKCKGQLLIFGATNWDLIGRKEVPKQQAAYRNLGQNLWGPHRYGCLAGVRVRTVVSGSCAAHSLLITTEGKLWSWGRNEKGQLGHGDTKRVEAPRLIEGLSHEVIVSAACGRNHTLALTETGSVFAFGENKMGQLGLGNQTDAVPSPAQIMYNGQPITKMACGAEFSMIMDCKGNLYSFGCPEYGQLGHNSDGKFIARAQRIEYDCELVPRRVAIFIEKTKDGQILPVPNVVVRDVACGANHTLVLDSQKRVFSWGFGGYGRLGHAEQKDEMVPRLVKLFDFPGRGASQIYAGYTCSFAVSEVGGLFFWGATNTSRESTMYPKAVQDLCGWRIRSLACGKSSIIVAADESTISWGPSPTFGELGYGDHKPKSSTAAQEVKTLDGIFSEQVAMGYSHSLVIARDESETEKEKIKKLPEYNPRTL.

The segment at 1-83 (MPRKKAAAAA…TAGKAGGAAV (83 aa)) is disordered. The residue at position 16 (Ser-16) is a Phosphoserine. Thr-20 bears the Phosphothreonine mark. Residues 24 to 36 (GPRKRGGPAGRKR) are compositionally biased toward basic residues. Phosphoserine occurs at positions 43, 44, 45, 46, 50, and 51. Over residues 71 to 82 (RPATAGKAGGAA) the composition is skewed to low complexity. Lys-92 and Lys-124 each carry N6-acetyllysine. RCC1 repeat units follow at residues 103-165 (KGQL…SLLI), 168-219 (EGKL…ALTE), 221-271 (GSVF…IMDC), 273-347 (GNLY…VLDS), 348-401 (QKRV…AVSE), 403-447 (GGLF…VAAD), and 448-501 (ESTI…VIAR). Lys-293 is subject to N6-acetyllysine. A required for interaction with RAC1 region spans residues 318 to 325 (KTKDGQIL). Thr-342 bears the Phosphothreonine mark. Residue Lys-377 is modified to N6-acetyllysine. The span at 502–515 (DESETEKEKIKKLP) shows a compositional bias: basic and acidic residues. Positions 502 to 522 (DESETEKEKIKKLPEYNPRTL) are disordered.

In terms of assembly, interacts with RAC1. Interacts with nucleotide-free and with GDP and GTP-bound forms of RAC1, with a slight preference for GDP-bound RAC1. Binds preferentially to the nucleotide-free form of RAC1. Interacts with CORO1C. Interacts with microtubules.

The protein localises to the nucleus. It localises to the nucleolus. It is found in the cytoplasm. Its subcellular location is the cytoskeleton. The protein resides in the chromosome. The protein localises to the centromere. It localises to the spindle. It is found in the midbody. Its subcellular location is the cell membrane. Functionally, multifunctional protein that may affect its functions by regulating the activity of small GTPases, such as RAC1 and RALA. Required for normal progress through the cell cycle, both during interphase and during mitosis. Required for the presence of normal levels of MAD2L1, AURKB and BIRC5 on inner centromeres during mitosis, and for normal attachment of kinetochores to mitotic spindles. Required for normal organization of the microtubule cytoskeleton in interphase cells. Functions as guanine nucleotide exchange factor (GEF) for RALA. Interferes with the activation of RAC1 by guanine nucleotide exchange factors. Prevents accumulation of active, GTP-bound RAC1, and suppresses RAC1-mediated reorganization of the actin cytoskeleton and formation of membrane protrusions. Required for normal cellular responses to contacts with the extracellular matrix of adjacent cells, and for directional cell migration in response to a fibronectin gradient (in vitro). This Homo sapiens (Human) protein is Protein RCC2 (RCC2).